A 152-amino-acid polypeptide reads, in one-letter code: Xanthine-guanine phosphoribosyltransferase (152 aa).

Residues 37–38, Arg-69, and 88–96 each bind 5-phospho-alpha-D-ribose 1-diphosphate; these read RG and DDLVDSGDT. Arg-69 provides a ligand contact to GMP. Residue Asp-89 coordinates Mg(2+). Asp-92 and Ile-135 together coordinate guanine. Residues Asp-92 and Ile-135 each contribute to the xanthine site. GMP contacts are provided by residues 92–96 and 134–135; these read DSGDT and WI.

The protein belongs to the purine/pyrimidine phosphoribosyltransferase family. XGPT subfamily. As to quaternary structure, homotetramer. Mg(2+) serves as cofactor.

The protein resides in the cell inner membrane. The enzyme catalyses GMP + diphosphate = guanine + 5-phospho-alpha-D-ribose 1-diphosphate. It carries out the reaction XMP + diphosphate = xanthine + 5-phospho-alpha-D-ribose 1-diphosphate. The catalysed reaction is IMP + diphosphate = hypoxanthine + 5-phospho-alpha-D-ribose 1-diphosphate. It functions in the pathway purine metabolism; GMP biosynthesis via salvage pathway; GMP from guanine: step 1/1. The protein operates within purine metabolism; XMP biosynthesis via salvage pathway; XMP from xanthine: step 1/1. Functionally, purine salvage pathway enzyme that catalyzes the transfer of the ribosyl-5-phosphate group from 5-phospho-alpha-D-ribose 1-diphosphate (PRPP) to the N9 position of the 6-oxopurines guanine and xanthine to form the corresponding ribonucleotides GMP (guanosine 5'-monophosphate) and XMP (xanthosine 5'-monophosphate), with the release of PPi. To a lesser extent, also acts on hypoxanthine. The protein is Xanthine-guanine phosphoribosyltransferase of Aliivibrio salmonicida (strain LFI1238) (Vibrio salmonicida (strain LFI1238)).